We begin with the raw amino-acid sequence, 973 residues long: Nuclear factor NF-kappa-B p105 subunit (973 aa).

The RHD domain maps to 38-245 (ADGPYLQILE…DAIYDSKAPN (208 aa)). C60 bears the S-nitrosocysteine; alternate mark. The S-(15-deoxy-Delta12,14-prostaglandin J2-9-yl)cysteine; alternate moiety is linked to residue C60. Residue K324 forms a Glycyl lysine isopeptide (Lys-Gly) (interchain with G-Cter in SUMO2) linkage. S336 carries the phosphoserine modification. A Nuclear localization signal motif is present at residues 359–364 (QRKRQK). Residues 371 to 394 (DSFGGGSGAGAGGGGMFGSGGGGG) form a GRR region. The segment at 434 to 467 (TINTKFKNEPRDCAKSDDREILNPPEKETQGEGP) is disordered. The tract at residues 435-973 (INTKFKNEPR…GQDGPIEGKI (539 aa)) is interaction with CFLAR. Over residues 439 to 463 (FKNEPRDCAKSDDREILNPPEKETQ) the composition is skewed to basic and acidic residues. N6-acetyllysine is present on K440. S449 is modified (phosphoserine). ANK repeat units lie at residues 540-570 (NGDS…SISD), 579-608 (LYQT…DLSL), 612-641 (WGNS…AALL), 648-677 (EGLN…EVNA), 682-711 (SGRT…ALVD), and 716-745 (DGTT…DPLV). An essential for interaction with HIF1AN region spans residues 648–682 (EGLNAIHIAVMSNSLSCLQLLVAAGAEVNAQEQKS). N676 is subject to (3S)-3-hydroxyasparagine; by HIF1AN. S757 bears the Phosphoserine mark. The stretch at 769-799 (PGTTPLDMAANWQVFDILNGKPYEPVFTSDD) is one ANK 7 repeat. The Death domain occupies 803–890 (QGDIKQLTED…EAIEVIQAAF (88 aa)). The residue at position 898 (S898) is a Phosphoserine. S912 is subject to Phosphoserine; by GSK3-beta; in vitro. Phosphoserine is present on S928. Residues S932 and S937 each carry the phosphoserine; by IKKB modification. S942 carries the post-translational modification Phosphoserine. Phosphothreonine is present on T948.

As to quaternary structure, component of the NF-kappa-B p65-p50 complex. Homodimer; component of the NF-kappa-B p50-p50 complex. Component of the NF-kappa-B p105-p50 complex. Component of the NF-kappa-B p50-c-Rel complex. Component of a complex consisting of the NF-kappa-B p50-p50 homodimer and BCL3. Also interacts with MAP3K8. NF-kappa-B p50 subunit interacts with NCOA3 coactivator, which may coactivate NF-kappa-B dependent expression via its histone acetyltransferase activity. Interacts with TSC22D3; this interaction prevents nuclear translocation and DNA-binding. Interacts with SPAG9 and UNC5CL. NFKB1/p105 interacts with CFLAR; the interaction inhibits p105 processing into p50. NFKB1/p105 forms a ternary complex with MAP3K8 and TNIP2. Interacts with GSK3B; the interaction prevents processing of p105 to p50. NFKB1/p50 interacts with NFKBIE. NFKB1/p50 interacts with NFKBIZ. Nuclear factor NF-kappa-B p50 subunit interacts with NFKBID. Directly interacts with MEN1. Interacts with HIF1AN. Interacts with FEM1A; interaction is direct. Post-translationally, generation of the NF-kappa-B p50 (Nuclear factor NF-kappa-B p50 subunit) transcription factor takes place both cotranslationally and post-translationally via non-mutually exclusive mechanisms. A cotranslational processing allows the production of both p50 and p105 (Nuclear factor NF-kappa-B p105 subunit) from a single NFKB1 mRNA. While translation occurs, the particular unfolded structure after the GRR repeat region acts as a substrate for the proteasome, promoting degradation of the C-terminus. The GRR acts as a proteasomal 'stop signal', protecting the region upstream of the GRR from degradation and promoting generation of p50. It is unclear if limited proteasome degradation during cotranslational processing depends on ubiquitination. NF-kappa-B p50 is also generated post-translationally following ubiquitination by the KPC complex, leading to limited processing by the proteasome downstream of the GRR region, thereby generating p50. Phosphorylation at the C-terminus by IKBKB/IKKB acts as a signal for ubiquitination and promotes either complete degradation or processing to generate the NF-kappa-B p50 (Nuclear factor NF-kappa-B p50 subunit). Phosphorylation at Ser-912 primes p105 for proteolytic processing in response to TNF-alpha stimulation. Phosphorylation at Ser-928, Ser-932 and Ser-937 are required for BTRC/BTRCP-mediated ubiquitination and proteolysis. Phosphorylation at Ser-932 is also required for ubiquitination by the KPC complex and limited processing to generate NF-kappa-B p50 (Nuclear factor NF-kappa-B p50 subunit). In terms of processing, polyubiquitinated at multiple Lys residues in the C-terminus. Polyubiquitinated by the SCF(FBXW11) and SCF(BTRC) complexes following phosphorylation at Ser-928, Ser-932 and Ser-937, leading to its complete degradation. In contrast, polyubiquitination by the KPC complex following phosphorylation at Ser-932 leads to limited proteosomal processing and generation of the active NF-kappa-B p50 (Nuclear factor NF-kappa-B p50 subunit). Post-translationally, S-nitrosylation of Cys-60 affects DNA binding. The covalent modification of cysteine by 15-deoxy-Delta12,14-prostaglandin-J2 is autocatalytic and reversible. It may occur as an alternative to other cysteine modifications, such as S-nitrosylation and S-palmitoylation.

The protein localises to the cytoplasm. It localises to the nucleus. NF-kappa-B is a pleiotropic transcription factor present in almost all cell types and is the endpoint of a series of signal transduction events that are initiated by a vast array of stimuli related to many biological processes such as inflammation, immunity, differentiation, cell growth, tumorigenesis and apoptosis. NF-kappa-B is a homo- or heterodimeric complex formed by the Rel-like domain-containing proteins RELA/p65, RELB, NFKB1/p105, NFKB1/p50, REL and NFKB2/p52 and the heterodimeric p65-p50 complex appears to be most abundant one. The dimers bind at kappa-B sites in the DNA of their target genes and the individual dimers have distinct preferences for different kappa-B sites that they can bind with distinguishable affinity and specificity. Different dimer combinations act as transcriptional activators or repressors, respectively. NF-kappa-B is controlled by various mechanisms of post-translational modification and subcellular compartmentalization as well as by interactions with other cofactors or corepressors. NF-kappa-B complexes are held in the cytoplasm in an inactive state complexed with members of the NF-kappa-B inhibitor (I-kappa-B) family. In a conventional activation pathway, I-kappa-B is phosphorylated by I-kappa-B kinases (IKKs) in response to different activators, subsequently degraded thus liberating the active NF-kappa-B complex which translocates to the nucleus. NF-kappa-B heterodimeric p65-p50 and RelB-p50 complexes are transcriptional activators. The NF-kappa-B p50-p50 homodimer is a transcriptional repressor, but can act as a transcriptional activator when associated with BCL3. NFKB1 appears to have dual functions such as cytoplasmic retention of attached NF-kappa-B proteins by p105 and generation of p50 by a cotranslational processing. The proteasome-mediated process ensures the production of both p50 and p105 and preserves their independent function, although processing of NFKB1/p105 also appears to occur post-translationally. p50 binds to the kappa-B consensus sequence 5'-GGRNNYYCC-3', located in the enhancer region of genes involved in immune response and acute phase reactions. In a complex with MAP3K8, NFKB1/p105 represses MAP3K8-induced MAPK signaling; active MAP3K8 is released by proteasome-dependent degradation of NFKB1/p105. Functionally, P105 is the precursor of the active p50 subunit (Nuclear factor NF-kappa-B p50 subunit) of the nuclear factor NF-kappa-B. Acts as a cytoplasmic retention of attached NF-kappa-B proteins by p105. Its function is as follows. Constitutes the active form, which associates with RELA/p65 to form the NF-kappa-B p65-p50 complex to form a transcription factor. Together with RELA/p65, binds to the kappa-B consensus sequence 5'-GGRNNYYCC-3', located in the enhancer region of genes involved in immune response and acute phase reactions. The sequence is that of Nuclear factor NF-kappa-B p105 subunit (Nfkb1) from Rattus norvegicus (Rat).